The chain runs to 83 residues: Cytochrome c-554(548) (83 aa).

Residues Cys-14, Cys-17, His-18, and Met-63 each contribute to the heme c site.

Homodimer. Post-translationally, binds 1 heme c group covalently per subunit.

This chain is Cytochrome c-554(548), found in Halomonas halodenitrificans (strain ATCC 12084 / NCIMB 8669) (Paracoccus halodenitrificans).